The following is an 819-amino-acid chain: Endonuclease MutS2 (819 aa).

339–346 serves as a coordination point for ATP; it reads GPNTGGKT. Residues 744-819 enclose the Smr domain; the sequence is VDVRGLRVDE…GAGVTVAELA (76 aa).

It belongs to the DNA mismatch repair MutS family. MutS2 subfamily. Homodimer. Binds to stalled ribosomes, contacting rRNA.

Functionally, endonuclease that is involved in the suppression of homologous recombination and thus may have a key role in the control of bacterial genetic diversity. In terms of biological role, acts as a ribosome collision sensor, splitting the ribosome into its 2 subunits. Detects stalled/collided 70S ribosomes which it binds and splits by an ATP-hydrolysis driven conformational change. Acts upstream of the ribosome quality control system (RQC), a ribosome-associated complex that mediates the extraction of incompletely synthesized nascent chains from stalled ribosomes and their subsequent degradation. Probably generates substrates for RQC. This chain is Endonuclease MutS2, found in Gemmatimonas aurantiaca (strain DSM 14586 / JCM 11422 / NBRC 100505 / T-27).